A 581-amino-acid chain; its full sequence is Arginine--tRNA ligase (581 aa).

The 'HIGH' region signature appears at P122–H132.

The protein belongs to the class-I aminoacyl-tRNA synthetase family. In terms of assembly, monomer.

Its subcellular location is the cytoplasm. It catalyses the reaction tRNA(Arg) + L-arginine + ATP = L-arginyl-tRNA(Arg) + AMP + diphosphate. This is Arginine--tRNA ligase from Francisella tularensis subsp. tularensis (strain FSC 198).